Here is a 503-residue protein sequence, read N- to C-terminus: Probable cytosol aminopeptidase (503 aa).

Mn(2+) is bound by residues lysine 270 and aspartate 275. The active site involves lysine 282. Mn(2+) contacts are provided by aspartate 293, aspartate 352, and glutamate 354. Residue arginine 356 is part of the active site.

The protein belongs to the peptidase M17 family. It depends on Mn(2+) as a cofactor.

It is found in the cytoplasm. The catalysed reaction is Release of an N-terminal amino acid, Xaa-|-Yaa-, in which Xaa is preferably Leu, but may be other amino acids including Pro although not Arg or Lys, and Yaa may be Pro. Amino acid amides and methyl esters are also readily hydrolyzed, but rates on arylamides are exceedingly low.. It carries out the reaction Release of an N-terminal amino acid, preferentially leucine, but not glutamic or aspartic acids.. Functionally, presumably involved in the processing and regular turnover of intracellular proteins. Catalyzes the removal of unsubstituted N-terminal amino acids from various peptides. This chain is Probable cytosol aminopeptidase, found in Salmonella arizonae (strain ATCC BAA-731 / CDC346-86 / RSK2980).